The following is a 635-amino-acid chain: Cytoplasmic polyadenylation element-binding protein 4 (635 aa).

Disordered stretches follow at residues 1–70, 149–284, and 337–369; these read MQDD…TLRL, GFGG…GFNT, and LFPMEDERSYGEDERSDQSLSGLGSPHSFPHQN. Polar residues predominate over residues 14–30; that stretch reads PQLQQESQEGQDKQTLS. Over residues 166–182 the composition is skewed to basic residues; that stretch reads PSPHPHFQHPHNQHRRS. Residues 216 to 231 are compositionally biased toward low complexity; it reads GSYQSPSSTPSSTSWS. The span at 232–241 shows a compositional bias: gly residues; that stretch reads PGGGYGGWGS. Positions 254–283 are enriched in polar residues; it reads PLNSISPLKKSFPNNQTQTQKYPRNNSGFN. The segment covering 341-353 has biased composition (basic and acidic residues); that stretch reads EDERSYGEDERSD. 2 consecutive RRM domains span residues 378-469 and 486-568; these read RKVF…PWNL and KTIF…PYVL.

This sequence belongs to the RRM CPEB family.

It localises to the cytoplasm. Its subcellular location is the cell projection. The protein localises to the dendrite. The protein resides in the dendritic spine. It is found in the postsynaptic density. It localises to the axon. Its subcellular location is the growth cone. The protein localises to the endoplasmic reticulum. The protein resides in the perinuclear region. Functionally, sequence-specific RNA-binding protein that binds to the cytoplasmic polyadenylation element (CPE), an uridine-rich sequence element (consensus sequence 5'-UUUUUAU-3') within the mRNA 3'-UTR. RNA binding results in a clear conformational change analogous to the Venus fly trap mechanism. In Danio rerio (Zebrafish), this protein is Cytoplasmic polyadenylation element-binding protein 4 (cpeb4).